A 363-amino-acid chain; its full sequence is Serine/threonine-protein kinase SRK2A (363 aa).

The 257-residue stretch at 4 to 260 (YELVKDIGAG…IAEIKKHSWF (257 aa)) folds into the Protein kinase domain. Residues 10–18 (IGAGNFGVA) and Lys33 contribute to the ATP site. The Proton acceptor role is filled by Asp123. The disordered stretch occupies residues 306 to 363 (SRSIGGFGWGGNGDADGKEEDAEDVEEEEEEVEEEEDDEDEYDKTVKEVHASGEVRIS). Over residues 310–319 (GGFGWGGNGD) the composition is skewed to gly residues. Positions 322-347 (GKEEDAEDVEEEEEEVEEEEDDEDEY) are enriched in acidic residues. The span at 348-363 (DKTVKEVHASGEVRIS) shows a compositional bias: basic and acidic residues.

Belongs to the protein kinase superfamily. Ser/Thr protein kinase family. Interacts with TOPP1. Expressed in seedlings.

The catalysed reaction is L-seryl-[protein] + ATP = O-phospho-L-seryl-[protein] + ADP + H(+). It carries out the reaction L-threonyl-[protein] + ATP = O-phospho-L-threonyl-[protein] + ADP + H(+). This Arabidopsis thaliana (Mouse-ear cress) protein is Serine/threonine-protein kinase SRK2A (SRK2A).